We begin with the raw amino-acid sequence, 396 residues long: Phosphopentomutase (396 aa).

Mn(2+)-binding residues include Asp-14, Asp-286, His-291, Asp-327, His-328, and His-339.

The protein belongs to the phosphopentomutase family. Requires Mn(2+) as cofactor.

The protein localises to the cytoplasm. The catalysed reaction is 2-deoxy-alpha-D-ribose 1-phosphate = 2-deoxy-D-ribose 5-phosphate. It carries out the reaction alpha-D-ribose 1-phosphate = D-ribose 5-phosphate. It participates in carbohydrate degradation; 2-deoxy-D-ribose 1-phosphate degradation; D-glyceraldehyde 3-phosphate and acetaldehyde from 2-deoxy-alpha-D-ribose 1-phosphate: step 1/2. In terms of biological role, isomerase that catalyzes the conversion of deoxy-ribose 1-phosphate (dRib-1-P) and ribose 1-phosphate (Rib-1-P) to deoxy-ribose 5-phosphate (dRib-5-P) and ribose 5-phosphate (Rib-5-P), respectively. This is Phosphopentomutase from Staphylococcus carnosus (strain TM300).